A 348-amino-acid polypeptide reads, in one-letter code: UDP-3-O-acylglucosamine N-acyltransferase (348 aa).

His237 functions as the Proton acceptor in the catalytic mechanism.

It belongs to the transferase hexapeptide repeat family. LpxD subfamily. Homotrimer.

It catalyses the reaction a UDP-3-O-[(3R)-3-hydroxyacyl]-alpha-D-glucosamine + a (3R)-hydroxyacyl-[ACP] = a UDP-2-N,3-O-bis[(3R)-3-hydroxyacyl]-alpha-D-glucosamine + holo-[ACP] + H(+). It functions in the pathway bacterial outer membrane biogenesis; LPS lipid A biosynthesis. In terms of biological role, catalyzes the N-acylation of UDP-3-O-acylglucosamine using 3-hydroxyacyl-ACP as the acyl donor. Is involved in the biosynthesis of lipid A, a phosphorylated glycolipid that anchors the lipopolysaccharide to the outer membrane of the cell. This Geotalea daltonii (strain DSM 22248 / JCM 15807 / FRC-32) (Geobacter daltonii) protein is UDP-3-O-acylglucosamine N-acyltransferase.